A 321-amino-acid chain; its full sequence is WD repeat-containing protein VIP3 (321 aa).

WD repeat units lie at residues 12–55 (AHED…LVRT), 58–97 (GHSL…TIAV), 100–140 (APPS…LIST), 156–195 (SSKK…LLHQ), 198–238 (GHNM…LLGS), 241–280 (GHTS…AIQT), and 283–319 (NHND…SLYD).

In terms of assembly, component of the nuclear PAF1 complex (PAF1C), which consists of VIP2/ELF7/PAF1, VIP3/SKI8/WDR61, VIP4/LEO1, VIP5/RTF1, VIP6/ELF8/CTR9 and CDC73. Component of the cytoplasmic SKI complex, which consists of SKI2, SKI3 and VIP3/SKI8. Interacts with VIP4 and VIP6.

The protein localises to the nucleus. It localises to the cytoplasm. Component of the PAF1 complex (PAF1C) which is involved in histone modifications such as methylation on histone H3 'Lys-4' (H3K4me3). Involved in regulation of flowering time. Required for the expression of the flowering repressor and MADS box gene FLC. Required for histone H3 trimethylation on 'Lys-4' (H3K4me3) and histone dimethylation on 'Lys-36' (H3K36me2) at the FLC locus. Prevents trimethylation on 'Lys-27' (H3K27me3) at the same locus. Not required for meiotic recombination or progression. Component of the SKI complex which is thought to be involved in exosome-mediated RNA decay and associates with transcriptionally active genes in a manner dependent on PAF1 complex (PAF1C). Required for proper progression of cell differentiation process. In Arabidopsis thaliana (Mouse-ear cress), this protein is WD repeat-containing protein VIP3.